We begin with the raw amino-acid sequence, 457 residues long: Zinc finger protein ZIPIC (457 aa).

The region spanning 3-84 is the ZAD domain; sequence CCICQFSVRV…ILELIHSPYM (82 aa). 6 consecutive C2H2-type zinc fingers follow at residues 257 to 280, 284 to 306, 312 to 334, 340 to 362, 369 to 391, and 397 to 419; these read IQCP…KREH, YVCD…LQNH, FACP…MAWH, YQCD…KMIH, LECQ…MRSH, and FACP…LREH. The C2H2-type 7; degenerate zinc finger occupies 430–448; sequence FHCSKCTHTFINEQNYDAH.

Interacts (via region between the ZAD domain and the first zinc finger domain) with Cp190 (via centrosomal targeting M domain); the interaction is direct. Interacts with pita.

Its subcellular location is the nucleus. The protein resides in the chromosome. Insulator DNA-binding protein. Recruits Cp190 and cooperatively binds to chromatin promoter regions to exert transcriptional regulator and chromatin insulator functions. Chromatin insulators are regulatory elements that establish independent domains of transcriptional activity within eukaryotic genomes. Insulators are proposed to structure the chromatin fiber into independent domains of differing transcriptional potential by promoting the formation of distinct chromatin loops to form topologically associating domains (TADs). Chromatin binding sites often cluster with those of other insulator DNA-binding proteins such as pita, CTCF and BEAF-32, but not Su(Hw). This is Zinc finger protein ZIPIC from Drosophila melanogaster (Fruit fly).